We begin with the raw amino-acid sequence, 419 residues long: Pregnancy-specific beta-1-glycoprotein 4 (419 aa).

Residues 1-34 form the signal peptide; sequence MGPLSAPPCTQRITWKGVLLTASLLNFWNPPTTA. The 110-residue stretch at 35 to 144 folds into the Ig-like V-type domain; the sequence is QVTIEAQPPK…TGHFTFTLHL (110 aa). N-linked (GlcNAc...) asparagine glycosylation is found at Asn-104, Asn-111, Asn-199, Asn-268, Asn-299, and Asn-303. 3 consecutive Ig-like C2-type domains span residues 147 to 234, 237 to 327, and 332 to 410; these read PKPS…VTLN, PKLS…VTLN, and PDLP…KSIT. 3 disulfide bridges follow: Cys-169/Cys-217, Cys-262/Cys-310, and Cys-354/Cys-394.

The protein belongs to the immunoglobulin superfamily. CEA family.

Its subcellular location is the secreted. This Homo sapiens (Human) protein is Pregnancy-specific beta-1-glycoprotein 4 (PSG4).